We begin with the raw amino-acid sequence, 244 residues long: MANKGPRKHLKRLPAPKNWQISRKTNKYTTRPSAGPHAMGSSLPLLLVLRDLLGYADNAREAKKVIKMGKVLVDGVKRKDHRYPTGLMDVISLPDANESFLVVLDEKGRIKLNKIKDNTKKLCKIENKTVIKGGHIQLNLHDGRNQIVKLADATKAEEDIYKTGDCVILSIPEQSIVGHVQFGEGKLAYITGGKHVGDFAKIIGIEKKQLYPDIITLETENGEQFKTIRDYVFIVGDDKPVISM.

Positions 1–14 (MANKGPRKHLKRLP) are enriched in basic residues. The disordered stretch occupies residues 1–36 (MANKGPRKHLKRLPAPKNWQISRKTNKYTTRPSAGP). A compositionally biased stretch (polar residues) spans 19-32 (WQISRKTNKYTTRP). An S4 RNA-binding domain is found at 43-106 (LPLLLVLRDL…NESFLVVLDE (64 aa)).

Belongs to the eukaryotic ribosomal protein eS4 family.

The chain is Small ribosomal subunit protein eS4 from Methanococcus aeolicus (strain ATCC BAA-1280 / DSM 17508 / OCM 812 / Nankai-3).